Reading from the N-terminus, the 426-residue chain is Gamma-glutamyl phosphate reductase (426 aa).

This sequence belongs to the gamma-glutamyl phosphate reductase family.

The protein resides in the cytoplasm. The catalysed reaction is L-glutamate 5-semialdehyde + phosphate + NADP(+) = L-glutamyl 5-phosphate + NADPH + H(+). It participates in amino-acid biosynthesis; L-proline biosynthesis; L-glutamate 5-semialdehyde from L-glutamate: step 2/2. Functionally, catalyzes the NADPH-dependent reduction of L-glutamate 5-phosphate into L-glutamate 5-semialdehyde and phosphate. The product spontaneously undergoes cyclization to form 1-pyrroline-5-carboxylate. The protein is Gamma-glutamyl phosphate reductase of Deinococcus geothermalis (strain DSM 11300 / CIP 105573 / AG-3a).